We begin with the raw amino-acid sequence, 167 residues long: Phosphopantetheine adenylyltransferase (167 aa).

S11 provides a ligand contact to substrate. Residues 11–12 (SF) and H19 each bind ATP. Substrate-binding residues include K43, T76, and R90. ATP-binding positions include 91-93 (GIR), E101, and 126-132 (YDALSST).

The protein belongs to the bacterial CoaD family. In terms of assembly, homohexamer. The cofactor is Mg(2+).

It is found in the cytoplasm. It carries out the reaction (R)-4'-phosphopantetheine + ATP + H(+) = 3'-dephospho-CoA + diphosphate. The protein operates within cofactor biosynthesis; coenzyme A biosynthesis; CoA from (R)-pantothenate: step 4/5. Its function is as follows. Reversibly transfers an adenylyl group from ATP to 4'-phosphopantetheine, yielding dephospho-CoA (dPCoA) and pyrophosphate. In Lacticaseibacillus paracasei (strain ATCC 334 / BCRC 17002 / CCUG 31169 / CIP 107868 / KCTC 3260 / NRRL B-441) (Lactobacillus paracasei), this protein is Phosphopantetheine adenylyltransferase.